A 235-amino-acid polypeptide reads, in one-letter code: Claudin-16 (235 aa).

At 1–3 the chain is on the cytoplasmic side; the sequence is MKD. Residues 4–24 form a helical membrane-spanning segment; sequence LLQYAACFLAIFSTGFLIVAT. Residues 25–79 lie on the Extracellular side of the membrane; that stretch reads RTDCWMVNADDSLEVSTKCRGLWWECVTNAFDGIRTCDEYDSIYAEHPLKLVVTR. Residues 80 to 100 traverse the membrane as a helical segment; that stretch reads ALMITADILAGFGFITLLLGL. Over 101–115 the chain is Cytoplasmic; sequence DCVKFLPDEPHIKVR. Residues 116 to 136 form a helical membrane-spanning segment; that stretch reads LCFVAGTVLLIAGTPGIIGSV. At 137–169 the chain is on the extracellular side; sequence WYAVDVYVERSSLVLHNIFLGIQYKFGWSCWLG. The chain crosses the membrane as a helical span at residues 170 to 190; it reads MAGSLGCFLAGALLTCCLYLF. Over 191–235 the chain is Cytoplasmic; sequence KDVGPERNYPYAMRKPYSTAGVSMAKSYKAPRTETAKMYAVDTRV. Residues 233–235 carry the Interaction with TJP1 motif; the sequence is TRV.

Belongs to the claudin family. Can form heteropolymeric tight junction strands with other claudins. Interacts with CLDN19. Interacts (via PDZ-binding motif TRV) with TJP1 (via PDZ domain). Cannot form tight junction strands on its own.

The protein localises to the cell junction. It localises to the tight junction. It is found in the cell membrane. The enzyme catalyses Mg(2+)(in) = Mg(2+)(out). It catalyses the reaction Ca(2+)(in) = Ca(2+)(out). It carries out the reaction Na(+)(in) = Na(+)(out). The catalysed reaction is K(+)(in) = K(+)(out). The enzyme catalyses Rb(+)(in) = Rb(+)(out). It catalyses the reaction Cs(+)(in) = Cs(+)(out). It carries out the reaction Li(+)(in) = Li(+)(out). In terms of biological role, forms paracellular channels: coassembles with CLDN19 into tight junction strands with cation-selective channels through the strands, conveying epithelial permeability in a process known as paracellular tight junction permeability. Involved in the maintenance of ion gradients along the nephron. In the thick ascending limb (TAL) of Henle's loop, facilitates sodium paracellular permeability from the interstitial compartment to the lumen, contributing to the lumen-positive transepithelial potential that drives paracellular magnesium and calcium reabsorption. The protein is Claudin-16 of Rattus norvegicus (Rat).